Consider the following 237-residue polypeptide: Phosphoribosylaminoimidazole-succinocarboxamide synthase (237 aa).

Belongs to the SAICAR synthetase family.

It carries out the reaction 5-amino-1-(5-phospho-D-ribosyl)imidazole-4-carboxylate + L-aspartate + ATP = (2S)-2-[5-amino-1-(5-phospho-beta-D-ribosyl)imidazole-4-carboxamido]succinate + ADP + phosphate + 2 H(+). It functions in the pathway purine metabolism; IMP biosynthesis via de novo pathway; 5-amino-1-(5-phospho-D-ribosyl)imidazole-4-carboxamide from 5-amino-1-(5-phospho-D-ribosyl)imidazole-4-carboxylate: step 1/2. The polypeptide is Phosphoribosylaminoimidazole-succinocarboxamide synthase (Fusobacterium nucleatum subsp. nucleatum (strain ATCC 25586 / DSM 15643 / BCRC 10681 / CIP 101130 / JCM 8532 / KCTC 2640 / LMG 13131 / VPI 4355)).